Reading from the N-terminus, the 397-residue chain is tRNA-specific 2-thiouridylase MnmA (397 aa).

ATP-binding positions include 19 to 26 (AMSGGVDS) and L45. The active-site Nucleophile is the C113. Cysteines 113 and 210 form a disulfide. Residue G137 participates in ATP binding. An interaction with tRNA region spans residues 160-162 (RDQ). C210 acts as the Cysteine persulfide intermediate in catalysis.

This sequence belongs to the MnmA/TRMU family.

The protein localises to the cytoplasm. It carries out the reaction S-sulfanyl-L-cysteinyl-[protein] + uridine(34) in tRNA + AH2 + ATP = 2-thiouridine(34) in tRNA + L-cysteinyl-[protein] + A + AMP + diphosphate + H(+). Catalyzes the 2-thiolation of uridine at the wobble position (U34) of tRNA, leading to the formation of s(2)U34. In Rhodopseudomonas palustris (strain ATCC BAA-98 / CGA009), this protein is tRNA-specific 2-thiouridylase MnmA.